Consider the following 359-residue polypeptide: sn-1 acyl-lipid omega-3 desaturase (ferredoxin) (359 aa).

Residues 1–15 (MQLDTISFNNPLNSE) are compositionally biased toward polar residues. The disordered stretch occupies residues 1–20 (MQLDTISFNNPLNSETSEDT). A run of 2 helical transmembrane segments spans residues 47–67 (LFYF…ASYL) and 70–90 (WLFF…LFVV). The short motif at 92–96 (HDCGH) is the Histidine box-1 element. Positions 128–132 (HRTHH) match the Histidine box-2 motif. 2 consecutive transmembrane segments (helical) span residues 207–227 (VLLI…GWMW) and 228–248 (LLKY…LVTF). Positions 294 to 298 (HHIFL) match the Histidine box-3 motif.

Belongs to the fatty acid desaturase type 2 family. It depends on Fe(2+) as a cofactor.

Its subcellular location is the membrane. It carries out the reaction a 1-[(9Z,12Z)-octadecdienoyl]-2-acyl-glycerolipid + 2 reduced [2Fe-2S]-[ferredoxin] + O2 + 2 H(+) = a 1-[(9Z,12Z,15Z)-octadectrienoyl]-2-acyl-glycerolipid + 2 oxidized [2Fe-2S]-[ferredoxin] + 2 H2O. The catalysed reaction is a 1-[(6Z,9Z,12Z)-octadectrienoyl]-2-acyl-glycerolipid + 2 reduced [2Fe-2S]-[ferredoxin] + O2 + 2 H(+) = a 1-[(6Z,9Z,12Z,15Z)-octadectetraenoyl]-2-acyl-glycerolipid + 2 oxidized [2Fe-2S]-[ferredoxin] + 2 H2O. It participates in lipid metabolism; polyunsaturated fatty acid biosynthesis. Functionally, desaturase involved in fatty acid biosynthesis. Introduces a double bond at carbon 15 of linoleoyl and gamma-linolenoyl groups attached to the sn-1 position of the glycerol moiety of membrane glycerolipids. This Nostoc sp. (strain 36) protein is sn-1 acyl-lipid omega-3 desaturase (ferredoxin).